Reading from the N-terminus, the 82-residue chain is Small ribosomal subunit protein bS18 (82 aa).

The interval 1–20 is disordered; that stretch reads MVDINQIPTRRPFHRRRKTC.

It belongs to the bacterial ribosomal protein bS18 family. As to quaternary structure, part of the 30S ribosomal subunit. Forms a tight heterodimer with protein bS6.

Binds as a heterodimer with protein bS6 to the central domain of the 16S rRNA, where it helps stabilize the platform of the 30S subunit. In Brucella abortus (strain 2308), this protein is Small ribosomal subunit protein bS18.